A 246-amino-acid chain; its full sequence is UDP-N-acetyl-D-mannosaminuronic acid transferase (246 aa).

This sequence belongs to the glycosyltransferase 26 family.

The catalysed reaction is UDP-N-acetyl-alpha-D-mannosaminouronate + N-acetyl-alpha-D-glucosaminyl-di-trans,octa-cis-undecaprenyl diphosphate = beta-D-ManNAcA-(1-&gt;4)-alpha-D-GlcNAc-di-trans,octa-cis-undecaprenyl diphosphate + UDP + H(+). It participates in bacterial outer membrane biogenesis; enterobacterial common antigen biosynthesis. Its function is as follows. Catalyzes the synthesis of Und-PP-GlcNAc-ManNAcA (Lipid II), the second lipid-linked intermediate involved in enterobacterial common antigen (ECA) synthesis. The sequence is that of UDP-N-acetyl-D-mannosaminuronic acid transferase from Citrobacter koseri (strain ATCC BAA-895 / CDC 4225-83 / SGSC4696).